The following is a 521-amino-acid chain: MQKISDTLKLIITAGVSIALAIVAFFLGYLYRKKIAEKTIKSAEQEAQRIVEEAKKQAEAYKKEATLLAKEEIHRARSEFDREVRERRAELQRFERRLIQKEEMLDKKMAAVEEKEEQLNQKIKDVQKLQEEIELLKQKQQEELQRISGLTQEEARQIILKSVEQDVKHDVALMIKELEQQAKEEADKKAREIIALAIQRYSSDYVAENTVSVVTLPNDEMKGRIIGREGRNIKTFETVTGIDLIIDDTPEAVILSGFDPIRREIAKLTLEKLILDGRIHPARIEEMYEKAKREVENKIREEGERVVFELGIHNLHPELIKLIGKLRYRTSYGQNVLAHSIEVANIAGIMAAELGLDQSIAKRAGLLHDIGKAVDHEVEGSHALIGYDLAKRYKETNPDVLEAIGGHHGEMETRSIYNVLIQAADSVSAARPGARRESLESYIKRLQKLEEIANSFDGVEKAYAIQAGREIRIMVKPDHVSDDDIVIMAREIVKRIESELDYPGQIKVNVIREVRAVEYAK.

The chain crosses the membrane as a helical span at residues 10–30 (LIITAGVSIALAIVAFFLGYL). Residues 210-270 (TVSVVTLPND…IRREIAKLTL (61 aa)) form the KH domain. Residues 336 to 430 (VLAHSIEVAN…IQAADSVSAA (95 aa)) enclose the HD domain.

The protein belongs to the RNase Y family.

The protein resides in the cell membrane. In terms of biological role, endoribonuclease that initiates mRNA decay. The protein is Ribonuclease Y of Caldicellulosiruptor saccharolyticus (strain ATCC 43494 / DSM 8903 / Tp8T 6331).